Consider the following 183-residue polypeptide: MTAMAGEVVEILSADDLRRTLTRLASQVVEKARDALDKLVLLGIHTRGVPLAKLLGQQVEQLEGASLPIGELDITFYRDDLDRIGPRTPRQTLIPVDLSGRIVVLVDDVIFSGRTIRSALNAVHDYGRPNAIWLLALIDRGHRELPIHPDFTGKALPTARDEVVKVLLQGIDQRDGVELWKPS.

Substrate contacts are provided by residues 46–47 (TR), R87, 107–115 (DDVIFSGRT), R140, and V164. The PRPP-binding signature appears at 103–115 (VVLVDDVIFSGRT).

This sequence belongs to the purine/pyrimidine phosphoribosyltransferase family. PyrR subfamily.

The enzyme catalyses UMP + diphosphate = 5-phospho-alpha-D-ribose 1-diphosphate + uracil. Functionally, regulates the transcription of the pyrimidine nucleotide (pyr) operon in response to exogenous pyrimidines. Also displays a weak uracil phosphoribosyltransferase activity which is not physiologically significant. This chain is Bifunctional protein PyrR, found in Thermosynechococcus vestitus (strain NIES-2133 / IAM M-273 / BP-1).